A 997-amino-acid chain; its full sequence is Kinesin-like protein KIF19 (997 aa).

The region spanning 11–346 is the Kinesin motor domain; sequence QLMVALRVRP…LTYAGRAKNI (336 aa). 104–111 is an ATP binding site; the sequence is GPTGCGKT. A coiled-coil region spans residues 361–388; sequence IAQYTSIIADLRGEIQRLKCKIDQQAGR. Residues 477–494 show a composition bias toward basic and acidic residues; sequence EERRKESYTKEDSEKDSD. Disordered regions lie at residues 477–509, 665–704, 718–759, and 784–997; these read EERRKESYTKEDSEKDSDTGDEPDNLEPPEVAS, KITPAGATLTPDSDLESVKTLSSEAQRPQNNTLPPLGTDS, QVKS…SSEN, and AAQR…LQHN. A coiled-coil region spans residues 506–551; it reads EVASARENIAALVGEQKKLRKEKLALEQRCRELRARGRRLEETLPR. Residues 683–697 show a composition bias toward polar residues; the sequence is KTLSSEAQRPQNNTL. Residues 750 to 759 are compositionally biased toward low complexity; the sequence is INSSPESSEN. Composition is skewed to polar residues over residues 835–851 and 950–959; these read TLQHAISEDNLSSSTGE and PNQNTGSGNP.

It belongs to the TRAFAC class myosin-kinesin ATPase superfamily. Kinesin family. Strongly expressed in the oviduct and trachea. Expressed in testis, lung, ovary and brain.

The protein localises to the cytoplasm. The protein resides in the cytoskeleton. It localises to the cell projection. It is found in the cilium. In terms of biological role, plus end-directed microtubule-dependent motor protein that regulates the length of motile cilia by mediating depolymerization of microtubules at ciliary tips. The protein is Kinesin-like protein KIF19 (Kif19) of Mus musculus (Mouse).